The primary structure comprises 218 residues: uncharacterized protein (218 aa).

Residues 2–216 (IEVLNLTKKI…ETSEKVIYKK (215 aa)) form the ABC transporter domain. Residue 34 to 41 (GSNGSGKT) participates in ATP binding.

The protein belongs to the ABC transporter superfamily.

This is an uncharacterized protein from Bacillus subtilis (strain 168).